The chain runs to 108 residues: PTS system galactose-specific EIIB component (108 aa).

One can recognise a PTS EIIB type-3 domain in the interval 3–108 (DKVIALACAA…VLAAAENLMN (106 aa)). The active-site Phosphocysteine intermediate is Cys-10. A Phosphocysteine; by EIIA modification is found at Cys-10.

The enzyme catalyses N(pros)-phospho-L-histidyl-[protein] + D-galactose(out) = D-galactose 6-phosphate(in) + L-histidyl-[protein]. The phosphoenolpyruvate-dependent sugar phosphotransferase system (sugar PTS), a major carbohydrate active transport system, catalyzes the phosphorylation of incoming sugar substrates concomitantly with their translocation across the cell membrane. Involved in galactose transport with PtcA and Lmg_0963. The sequence is that of PTS system galactose-specific EIIB component from Lactococcus lactis subsp. cremoris (strain MG1363).